Reading from the N-terminus, the 617-residue chain is Phenylalanine--tRNA ligase beta subunit (617 aa).

One can recognise a B5 domain in the interval 306-383 (IQEKQINAQV…IGYGYDNLKK (78 aa)). Residues D361, D367, E370, and D371 each coordinate Mg(2+).

Belongs to the phenylalanyl-tRNA synthetase beta subunit family. Type 2 subfamily. As to quaternary structure, tetramer of two alpha and two beta subunits. Mg(2+) serves as cofactor.

Its subcellular location is the cytoplasm. The catalysed reaction is tRNA(Phe) + L-phenylalanine + ATP = L-phenylalanyl-tRNA(Phe) + AMP + diphosphate + H(+). This is Phenylalanine--tRNA ligase beta subunit (phesB) from Dictyostelium discoideum (Social amoeba).